The sequence spans 703 residues: MGFNIERADKPFVVKSPYKPSGDQPQAIAELAERIENGENDVVLMGATGTGKTATTAWLIEKLQRPTLIIEPNKTLAAQLCAEFRELMPDNAVSYFVSYYDYYQPEAYIPQTDTYIEKDSNINDDVERLRHQATANLLTRRDCVVVATVSCIYGLGTPEEYAGRMLFLKVGQEINRDDLLRQFVAMQYKRNDIAFTRGTFRVRGDTVEIIPVYEELAVRIEFFGDEIDRISTLHPLTGDEIDEENEVHIFPASHYVAGPERMERALKTIREELEERLAELRKQGKELEAQRLNMRTTYDLEMLTQVGVCSGVENYSRHFDGRAAGTPPHTLLDFFPDDFLLVIDESHVTVPQIGAMYEGDASRKRTLVEHGFRLPSAMDNRPLKWPEFLQRVGQTVYLSATPGDYEMGLSDGVVEQIIRPTGLLDPKIDVRPVKGQIDDLLAEIKARVAKNERALVTTLTKKMAEDLTDYLLERGIKVEYLHSDVDTLRRVELLRMLREGKIDVIVGINLLREGLDLPEVSLVAILDADKEGFLRSYRSLIQTIGRAARNVSGTVIMYADETTEAMRQAIDETDRRRAKQIAYNQEHGIDPKPLIKKISDVNDMLAKEDVDTQTLLEGGYRNAGKAGNTHLGVPVLDPNEADKRHEEILKAGLPAQDLADLIRQLSEQMHTAAEQLQFELAARLRDEIRDLKKELRQMTEANK.

In terms of domain architecture, Helicase ATP-binding spans 33-419; the sequence is ERIENGENDV…SDGVVEQIIR (387 aa). 46–53 contacts ATP; it reads GATGTGKT. Positions 99–122 match the Beta-hairpin motif; the sequence is YYDYYQPEAYIPQTDTYIEKDSNI. The Helicase C-terminal domain maps to 436 to 589; that stretch reads QIDDLLAEIK…QIAYNQEHGI (154 aa). The region spanning 659–694 is the UVR domain; it reads ADLIRQLSEQMHTAAEQLQFELAARLRDEIRDLKKE.

This sequence belongs to the UvrB family. In terms of assembly, forms a heterotetramer with UvrA during the search for lesions. Interacts with UvrC in an incision complex.

Its subcellular location is the cytoplasm. Functionally, the UvrABC repair system catalyzes the recognition and processing of DNA lesions. A damage recognition complex composed of 2 UvrA and 2 UvrB subunits scans DNA for abnormalities. Upon binding of the UvrA(2)B(2) complex to a putative damaged site, the DNA wraps around one UvrB monomer. DNA wrap is dependent on ATP binding by UvrB and probably causes local melting of the DNA helix, facilitating insertion of UvrB beta-hairpin between the DNA strands. Then UvrB probes one DNA strand for the presence of a lesion. If a lesion is found the UvrA subunits dissociate and the UvrB-DNA preincision complex is formed. This complex is subsequently bound by UvrC and the second UvrB is released. If no lesion is found, the DNA wraps around the other UvrB subunit that will check the other stand for damage. The sequence is that of UvrABC system protein B from Bifidobacterium longum (strain NCC 2705).